The sequence spans 198 residues: Cyclin-dependent kinase inhibitor 1B (198 aa).

The span at 1–11 (MSNVRVSNGSP) shows a compositional bias: polar residues. The segment at 1–34 (MSNVRVSNGSPSLERMDARQAEHPKPSACRNLFG) is disordered. S10 is modified (phosphoserine; by UHMK1). A compositionally biased stretch (basic and acidic residues) spans 14-25 (ERMDARQAEHPK). The tract at residues 51 to 91 (DMEEASQRKWNFDFQNHNPLEGRYQWQEVDKGSLPEFYYRP) is interaction with CDK2. Residue Y74 is modified to Phosphotyrosine; by SRC. Residues 85-198 (PEFYYRPPRP…KKPGLRRHQT (114 aa)) form a disordered region. Y88 carries the phosphotyrosine; by ABL, LYN and SRC modification. Y89 carries the phosphotyrosine modification. Positions 104-124 (QESQDVSGSRQAVPSIGSQAY) are enriched in polar residues. Residues 153–169 (KRPAADDSSSQNKRANR) carry the Nuclear localization signal motif. At T170 the chain carries Phosphothreonine. Positions 175–186 (SDGSLNAGSVEQ) are enriched in polar residues. T187 carries the post-translational modification Phosphothreonine; by PKB/AKT1, CDK1 and CDK2. At T198 the chain carries Phosphothreonine; by CaMK1, PKB/AKT1, RPS6KA1, RPS6KA3 and PIM1.

It belongs to the CDI family. As to quaternary structure, forms a ternary complex composed of CCNE1, CDK2 and CDKN1B. Interacts directly with CCNE1; the interaction is inhibited by CDK2-dependent phosphorylation on Thr-187. Interacts with COPS5, subunit of the COP9 signalosome complex; the interaction leads to CDKN1B degradation. Interacts with NUP50; the interaction leads to nuclear import and degradation of phosphorylated CDKN1B. Interacts with CCND1 and SNX6. Interacts (Thr-198-phosphorylated form) with 14-3-3 proteins, binds strongly YWHAQ, weakly YWHAE and YWHAH, but not YWHAB nor YWHAZ; the interaction with YWHAQ results in translocation to the cytoplasm. Interacts with AKT1 and LYN; the interactions lead to cytoplasmic mislocation, phosphorylation of CDKN1B and inhibition of cell cycle arrest. Forms a ternary complex with CCNA2 and CDK2; CDKN1B inhibits the kinase activity of CDK2 through conformational rearrangements. Interacts (unphosphorylated form) with CDK2. Forms a complex with CDK2 and SPDYA, but does not directly interact with SPDYA. Forms a ternary complex composed of cyclin D, CDK4 and CDKN1B. Interacts (phosphorylated on Tyr-88 and Tyr-89) with CDK4; the interaction is required for cyclin D and CDK4 complex assembly, induces nuclear translocation and activates the CDK4 kinase activity. Interacts with GRB2. Interacts with PIM1. Identified in a complex with SKP1, SKP2 and CKS1B. Interacts with UHMK1; the interaction leads to cytoplasmic mislocation, phosphorylation of CDKN1B and inhibition of cell cycle arrest. Also interacts with CDK1. Dephosphorylated on Thr-187 by PPM1H, leading to CDKN1B stability. In terms of processing, phosphorylated; phosphorylation occurs on serine, threonine and tyrosine residues. Phosphorylation on Ser-10 is the major site of phosphorylation in resting cells, takes place at the G(0)-G(1) phase and leads to protein stability. Phosphorylation on other sites is greatly enhanced by mitogens, growth factors, cMYC and in certain cancer cell lines. The phosphorylated form found in the cytoplasm is inactivate. Phosphorylation on Thr-198 is required for interaction with 14-3-3 proteins. Phosphorylation on Thr-187, by CDK1 and CDK2 leads to protein ubiquitination and proteasomal degradation. Tyrosine phosphorylation promotes this process. Phosphorylation by PKB/AKT1 can be suppressed by LY294002, an inhibitor of the catalytic subunit of PI3K. Phosphorylation on Tyr-88 and Tyr-89 has no effect on binding CDK2, but is required for binding CDK4. Dephosphorylated on tyrosine residues by G-CSF. Dephosphorylated on Thr-187 by PPM1H, leading to CDKN1B stability. Post-translationally, ubiquitinated; in the cytoplasm by the KPC complex (composed of RNF123/KPC1 and UBAC1/KPC2) and, in the nucleus, by SCF(SKP2). The latter requires prior phosphorylation on Thr-187. Ubiquitinated; by a TRIM21-containing SCF(SKP2)-like complex; leads to its degradation. Subject to degradation in the lysosome. Interaction with SNX6 promotes lysosomal degradation.

The protein localises to the nucleus. It is found in the cytoplasm. Its subcellular location is the endosome. Functionally, important regulator of cell cycle progression. Inhibits the kinase activity of CDK2 bound to cyclin A, but has little inhibitory activity on CDK2 bound to SPDYA. Involved in G1 arrest. Potent inhibitor of cyclin E- and cyclin A-CDK2 complexes. Forms a complex with cyclin type D-CDK4 complexes and is involved in the assembly, stability, and modulation of CCND1-CDK4 complex activation. Acts either as an inhibitor or an activator of cyclin type D-CDK4 complexes depending on its phosphorylation state and/or stoichometry. This Cricetulus griseus (Chinese hamster) protein is Cyclin-dependent kinase inhibitor 1B (CDKN1B).